A 146-amino-acid chain; its full sequence is Anti-sigma F factor (146 aa).

This sequence belongs to the anti-sigma-factor family.

The enzyme catalyses L-seryl-[protein] + ATP = O-phospho-L-seryl-[protein] + ADP + H(+). The catalysed reaction is L-threonyl-[protein] + ATP = O-phospho-L-threonyl-[protein] + ADP + H(+). Its function is as follows. Binds to sigma F and blocks its ability to form an RNA polymerase holoenzyme (E-sigma F). Phosphorylates SpoIIAA on a serine residue. This phosphorylation may enable SpoIIAA to act as an anti-anti-sigma factor that counteracts SpoIIAB and thus releases sigma F from inhibition. This chain is Anti-sigma F factor, found in Bacillus cytotoxicus (strain DSM 22905 / CIP 110041 / 391-98 / NVH 391-98).